The following is a 525-amino-acid chain: MLGRTLREVSSALKQGHITPTELCKKCLSLIKKTKYLNAYITVSEEVALKQAEESEKRYKQGQSLGDLDGIPVAVKDNFSTSGIETTCASNMLKGYLPPYNATVVQRLLDQGALLMGKTNLDEFAMGSGSTDGVFGPVKNPWTYSKQYRERSRQDAQEDSHWLITGGSSGGSAAAVAAFTCFAALGSDTGGSTRNPAAHCGTVGFKPSYGLVSRHGLIPLVNSMDVPGIFTRCVDDTAIVLGVLAGHDPKDSTTVNDPVKPTTLPSVPDVSGLCIGIPKEYLVPELSSEIRSLWSQAADLFEAEGARVIEVCLPHTCYSIVCYHVLCTSEVASNMARFDGLQYGHRSAVDMSSTEALYAATRQEGFNDVVKGRILSGNFFLLKENYENYFVKAQKVRRLIVNDFVNVFGSGVDVLLTPTTLTQAVPYLEFIKEDNRTRSAQDDIFTQAVNMAGLPAVNVPVALSSQGLPIGLQLIGRAFCDQQLLTVAKWFEKQVQFPVIQLQDLMDDGSLVPENGKLTSGSLTQ.

Residues Lys76 and Ser168 each act as charge relay system in the active site. The active-site Acyl-ester intermediate is the Ser192.

The protein belongs to the amidase family. GatA subfamily. As to quaternary structure, subunit of the heterotrimeric GatCAB amidotransferase (AdT) complex, composed of A (QRSL1), B (GATB) and C (GATC) subunits.

It localises to the mitochondrion. The enzyme catalyses L-glutamyl-tRNA(Gln) + L-glutamine + ATP + H2O = L-glutaminyl-tRNA(Gln) + L-glutamate + ADP + phosphate + H(+). Its function is as follows. Allows the formation of correctly charged Gln-tRNA(Gln) through the transamidation of misacylated Glu-tRNA(Gln) in the mitochondria. The reaction takes place in the presence of glutamine and ATP through an activated gamma-phospho-Glu-tRNA(Gln). The chain is Glutamyl-tRNA(Gln) amidotransferase subunit A, mitochondrial (Qrsl1) from Rattus norvegicus (Rat).